The following is an 870-amino-acid chain: Adhesin AWP1 (870 aa).

The signal sequence occupies residues 1–18 (MSLITIFAFFIKATLVLS). An N-linked (GlcNAc...) asparagine glycan is attached at Asn-224. A disulfide bridge connects residues Cys-284 and Cys-322. Residues 329-835 (ITPSSSVEPS…TRQTSVIAPG (507 aa)) form a disordered region. Low complexity predominate over residues 331–566 (PSSSVEPSSS…SSSAVVPTSS (236 aa)). A compositionally biased stretch (gly residues) spans 567 to 576 (AGGGNGGDNG). Over residues 577–641 (QPGADGQPGA…PGAAGQPGAA (65 aa)) the composition is skewed to low complexity. Residues 642 to 652 (GQPGAGSGGGS) show a composition bias toward gly residues. A glycan (N-linked (GlcNAc...) asparagine) is linked at Asn-669. The span at 675–721 (SGTGNGQAGSGQAGSGQVGSGQAGAGQAGSGQAGAGQAGSGQAGAGQ) shows a compositional bias: gly residues. Polar residues-rich tracts occupy residues 724–735 (LDNTASGQSEGG) and 792–801 (GSGTDQSSGR).

The protein localises to the secreted. Its subcellular location is the cell wall. Functionally, may play a role in cell adhesion. In Candida glabrata (strain ATCC 2001 / BCRC 20586 / JCM 3761 / NBRC 0622 / NRRL Y-65 / CBS 138) (Yeast), this protein is Adhesin AWP1.